The chain runs to 513 residues: Putative zinc finger CCCH domain-containing protein 51 (513 aa).

The tract at residues 155–180 (SMPRNSPNAGRNLVGHPHSSSKSSSK) is disordered. The span at 170 to 180 (HPHSSSKSSSK) shows a compositional bias: low complexity. A C3H1-type zinc finger spans residues 176–204 (KSSSKPCHFHFFRGYCKKGVNCQFFHGSV). An HTH OST-type domain is found at 218-299 (SLSKLDMEIR…HGQYHVVLVE (82 aa)). Positions 325–411 (NQIYMTFPVH…SELRMTWLKS (87 aa)) constitute an RRM domain.

The polypeptide is Putative zinc finger CCCH domain-containing protein 51 (Oryza sativa subsp. japonica (Rice)).